A 67-amino-acid polypeptide reads, in one-letter code: DNA-directed RNA polymerase subunit omega (67 aa).

The protein belongs to the RNA polymerase subunit omega family. In terms of assembly, the RNAP catalytic core consists of 2 alpha, 1 beta, 1 beta' and 1 omega subunit. When a sigma factor is associated with the core the holoenzyme is formed, which can initiate transcription.

It catalyses the reaction RNA(n) + a ribonucleoside 5'-triphosphate = RNA(n+1) + diphosphate. Its function is as follows. Promotes RNA polymerase assembly. Latches the N- and C-terminal regions of the beta' subunit thereby facilitating its interaction with the beta and alpha subunits. The chain is DNA-directed RNA polymerase subunit omega from Bacillus velezensis (strain DSM 23117 / BGSC 10A6 / LMG 26770 / FZB42) (Bacillus amyloliquefaciens subsp. plantarum).